Consider the following 78-residue polypeptide: Defensin-like protein 281 (78 aa).

The first 23 residues, 1–23 (MASTKYLVLLFICLSVLLTPGLG), serve as a signal peptide directing secretion. 3 disulfides stabilise this stretch: cysteine 37–cysteine 60, cysteine 46–cysteine 72, and cysteine 50–cysteine 74.

It belongs to the DEFL family.

It localises to the secreted. This chain is Defensin-like protein 281, found in Arabidopsis thaliana (Mouse-ear cress).